Consider the following 476-residue polypeptide: Endonuclease SceI small subunit (476 aa).

This sequence belongs to the LAGLIDADG endonuclease family. As to quaternary structure, endonuclease SceI (Endo.SceI) is a heterodimer of ENS2 and SSC1. In terms of processing, the N-terminus is blocked.

The protein localises to the mitochondrion. Functionally, catalytic component of endonuclease SceI (Endo.SceI), which cleaves specifically at multiple sites on mitochondrial DNA and produces double-stranded breaks. This is Endonuclease SceI small subunit (ENS2) from Saccharomyces cerevisiae (Baker's yeast).